A 428-amino-acid chain; its full sequence is Immunoglobulin superfamily containing leucine-rich repeat protein (428 aa).

The N-terminal stretch at 1–18 (MQELHLLWWALLLGLAQA) is a signal peptide. Residues 19 to 50 (CPEPCDCGEKYGFQIADCAYRDLEAVPPGFPA) form the LRRNT domain. N51 carries N-linked (GlcNAc...) asparagine glycosylation. LRR repeat units follow at residues 51 to 72 (NVTA…AFRE), 75 to 96 (LLQS…ALAS), 99 to 122 (HLKS…HNLS), 123 to 144 (ALQL…AFRS), and 147 to 168 (ALRS…TFTP). Residues 180-231 (NPFDCTCGIVWLKTWALATAVSIPEQDNIACTSPHVLKGTPLSRLPPLPCSA) enclose the LRRCT domain. Positions 232–343 (PSVQLSYQPS…GSAESSVDVA (112 aa)) constitute an Ig-like domain. An intrachain disulfide couples C257 to C327. An N-linked (GlcNAc...) asparagine glycan is attached at N309.

It is found in the secreted. This Pongo abelii (Sumatran orangutan) protein is Immunoglobulin superfamily containing leucine-rich repeat protein (ISLR).